Reading from the N-terminus, the 275-residue chain is Notch homolog 2 N-terminal-like protein B (275 aa).

The first 25 residues, 1 to 25 (MPALRPALLWALLALWLCCATPAHA), serve as a signal peptide directing secretion. EGF-like domains follow at residues 26–63 (LQCR…EYCQ), 64–102 (HRDP…EDCQ), 105–143 (TSHP…KECQ), and 144–180 (WTDA…QKCE). Cystine bridges form between Cys28–Cys41, Cys35–Cys51, Cys53–Cys62, Cys68–Cys79, Cys73–Cys90, Cys92–Cys101, Cys109–Cys121, Cys115–Cys131, Cys133–Cys142, Cys148–Cys159, Cys153–Cys168, Cys170–Cys179, Cys186–Cys198, Cys192–Cys207, Cys209–Cys218, Cys225–Cys236, and Cys230–Cys246. N-linked (GlcNAc...) asparagine glycosylation is present at Asn46. N-linked (GlcNAc...) asparagine glycosylation occurs at Asn155. One can recognise an EGF-like 5; calcium-binding domain in the interval 182–219 (DVNECDIPGHCQHGGICLNLPGSYQCQCLQGFTGQYCD). The region spanning 221-258 (LYVPCAPSPCVNGGTCRQTGDFTFECNCLPETVRRGTE) is the EGF-like 6 domain.

It belongs to the NOTCH family. As to quaternary structure, interacts with NOTCH2. Interacts with DLL1; the interaction is direct. In terms of tissue distribution, expressed in radial glia neural stem cells during cortical development.

It localises to the secreted. Its function is as follows. Human-specific protein that promotes neural progenitor proliferation and evolutionary expansion of the brain neocortex by regulating the Notch signaling pathway. Able to promote neural progenitor self-renewal, possibly by down-regulating neuronal differentiation genes, thereby delaying the differentiation of neuronal progenitors and leading to an overall final increase in neuronal production. Acts by enhancing the Notch signaling pathway via two different mechanisms that probably work in parallel to reach the same effect. Enhances Notch signaling pathway in a non-cell-autonomous manner via direct interaction with NOTCH2. Also promotes Notch signaling pathway in a cell-autonomous manner through inhibition of cis DLL1-NOTCH2 interactions, which promotes neuronal differentiation. The chain is Notch homolog 2 N-terminal-like protein B from Homo sapiens (Human).